The following is a 1091-amino-acid chain: Protein JSN1 (1091 aa).

Disordered stretches follow at residues glutamate 31–serine 51 and histidine 75–threonine 131. The segment covering threonine 99 to arginine 111 has biased composition (polar residues). Serine 129 carries the phosphoserine modification. At threonine 131 the chain carries Phosphothreonine. Serine 160 and serine 168 each carry phosphoserine. The RRM domain maps to asparagine 340 to isoleucine 426. Low complexity-rich tracts occupy residues glutamine 482 to serine 494 and asparagine 507 to alanine 520. Disordered stretches follow at residues glutamine 482–asparagine 534 and histidine 568–proline 591. Residues glutamine 557–serine 913 enclose the PUM-HD domain. Over residues histidine 568–phenylalanine 577 the composition is skewed to polar residues. Pumilio repeat units lie at residues alanine 617–arginine 652, lysine 653–glutamine 689, glycine 690–glutamate 724, serine 725–valine 760, and arginine 801–aspartate 837. The tract at residues leucine 911 to glycine 981 is disordered. Position 913 is a phosphoserine (serine 913). Low complexity-rich tracts occupy residues serine 915–histidine 935 and serine 951–serine 979.

The protein is Protein JSN1 (JSN1) of Saccharomyces cerevisiae (strain ATCC 204508 / S288c) (Baker's yeast).